Reading from the N-terminus, the 321-residue chain is tRNA U34 carboxymethyltransferase (321 aa).

Carboxy-S-adenosyl-L-methionine-binding positions include Lys-90, Trp-104, Lys-109, Gly-129, 151-153, 180-181, Met-195, Tyr-199, and Arg-314; these read DPT and IE.

Belongs to the class I-like SAM-binding methyltransferase superfamily. CmoB family. As to quaternary structure, homotetramer.

It catalyses the reaction carboxy-S-adenosyl-L-methionine + 5-hydroxyuridine(34) in tRNA = 5-carboxymethoxyuridine(34) in tRNA + S-adenosyl-L-homocysteine + H(+). Its function is as follows. Catalyzes carboxymethyl transfer from carboxy-S-adenosyl-L-methionine (Cx-SAM) to 5-hydroxyuridine (ho5U) to form 5-carboxymethoxyuridine (cmo5U) at position 34 in tRNAs. This chain is tRNA U34 carboxymethyltransferase, found in Haemophilus influenzae (strain PittGG).